The following is a 562-amino-acid chain: Nucleoprotein (562 aa).

The tract at residues 54-237 is binding site for the cap structure m7GTP; that stretch reads LRKTKRTDGD…ITKDESAINI (184 aa). Positions 381 and 383 each coordinate Mn(2+). Positions 391, 498, 501, and 523 each coordinate Zn(2+). Position 527 (D527) interacts with Mn(2+).

This sequence belongs to the arenaviridae nucleocapsid protein family. Homomultimerizes to form the nucleocapsid. Binds to viral genomic RNA. Interacts with glycoprotein G2. Interacts with protein Z; this interaction probably directs the encapsidated genome to budding sites. Interacts with protein L; this interaction does not interfere with Z-L interaction. Interacts with host IKBKE (via Protein kinase domain); the interaction inhibits IKBKE kinase activity.

The protein resides in the virion. It localises to the host cytoplasm. Its function is as follows. Encapsidates the genome, protecting it from nucleases. The encapsidated genomic RNA is termed the nucleocapsid (NC). Serves as template for viral transcription and replication. The increased presence of protein N in host cell does not seem to trigger the switch from transcription to replication as observed in other negative strain RNA viruses. Through the interaction with host IKBKE, strongly inhibits the phosphorylation and nuclear translocation of host IRF3, a protein involved in interferon activation pathway, leading to the inhibition of interferon-beta and IRF3-dependent promoters activation. Also encodes a functional 3'-5' exoribonuclease that degrades preferentially dsRNA substrates and thereby participates in the suppression of interferon induction. This Homo sapiens (Human) protein is Nucleoprotein.